The sequence spans 372 residues: 4-hydroxy-3-methylbut-2-en-1-yl diphosphate synthase (flavodoxin) (372 aa).

[4Fe-4S] cluster contacts are provided by C270, C273, C305, and E312.

The protein belongs to the IspG family. Requires [4Fe-4S] cluster as cofactor.

The catalysed reaction is (2E)-4-hydroxy-3-methylbut-2-enyl diphosphate + oxidized [flavodoxin] + H2O + 2 H(+) = 2-C-methyl-D-erythritol 2,4-cyclic diphosphate + reduced [flavodoxin]. The protein operates within isoprenoid biosynthesis; isopentenyl diphosphate biosynthesis via DXP pathway; isopentenyl diphosphate from 1-deoxy-D-xylulose 5-phosphate: step 5/6. Its function is as follows. Converts 2C-methyl-D-erythritol 2,4-cyclodiphosphate (ME-2,4cPP) into 1-hydroxy-2-methyl-2-(E)-butenyl 4-diphosphate. In Escherichia coli (strain SMS-3-5 / SECEC), this protein is 4-hydroxy-3-methylbut-2-en-1-yl diphosphate synthase (flavodoxin).